We begin with the raw amino-acid sequence, 69 residues long: Conotoxin reg3f (69 aa).

The N-terminal stretch at 1-20 is a signal peptide; that stretch reads MMSKLGVLLTICLLLFPLSA. Positions 21–52 are excised as a propeptide; the sequence is LPLDGDQPADQPAERMQDISPEQNPLFHPDKR. 3 disulfide bridges follow: cysteine 54–cysteine 68, cysteine 55–cysteine 66, and cysteine 60–cysteine 69. Cysteine 69 bears the Cysteine amide mark.

Expressed by the venom duct.

It localises to the secreted. In Conus regius (Crown cone), this protein is Conotoxin reg3f.